A 254-amino-acid chain; its full sequence is Type III pantothenate kinase (254 aa).

6–13 (DVGNSNIV) is a binding site for ATP. Substrate-binding positions include Tyr100 and 107 to 110 (GADR). The Proton acceptor role is filled by Asp109. Asp129 lines the K(+) pocket. Thr132 lines the ATP pocket. Thr184 lines the substrate pocket.

The protein belongs to the type III pantothenate kinase family. As to quaternary structure, homodimer. It depends on NH4(+) as a cofactor. Requires K(+) as cofactor.

The protein resides in the cytoplasm. The catalysed reaction is (R)-pantothenate + ATP = (R)-4'-phosphopantothenate + ADP + H(+). It functions in the pathway cofactor biosynthesis; coenzyme A biosynthesis; CoA from (R)-pantothenate: step 1/5. Catalyzes the phosphorylation of pantothenate (Pan), the first step in CoA biosynthesis. The chain is Type III pantothenate kinase from Citrifermentans bemidjiense (strain ATCC BAA-1014 / DSM 16622 / JCM 12645 / Bem) (Geobacter bemidjiensis).